The primary structure comprises 223 residues: UPF0758 protein Plut_0598 (223 aa).

The MPN domain maps to 100 to 222; sequence RVQGAKDVFE…WFSFRESNLL (123 aa). The Zn(2+) site is built by His171, His173, and Asp184. The JAMM motif signature appears at 171–184; the sequence is HNHPSGDTEPSNAD.

It belongs to the UPF0758 family.

This is UPF0758 protein Plut_0598 from Chlorobium luteolum (strain DSM 273 / BCRC 81028 / 2530) (Pelodictyon luteolum).